Reading from the N-terminus, the 276-residue chain is Shikimate dehydrogenase (NADP(+)) (276 aa).

Residues S19 to S21 and T66 contribute to the shikimate site. K70 functions as the Proton acceptor in the catalytic mechanism. NADP(+) is bound at residue D82. Positions 91 and 107 each coordinate shikimate. Residues G133–A137, N157–R162, and L222 contribute to the NADP(+) site. Y224 serves as a coordination point for shikimate. G245 is an NADP(+) binding site.

It belongs to the shikimate dehydrogenase family. As to quaternary structure, homodimer.

It carries out the reaction shikimate + NADP(+) = 3-dehydroshikimate + NADPH + H(+). It participates in metabolic intermediate biosynthesis; chorismate biosynthesis; chorismate from D-erythrose 4-phosphate and phosphoenolpyruvate: step 4/7. Involved in the biosynthesis of the chorismate, which leads to the biosynthesis of aromatic amino acids. Catalyzes the reversible NADPH linked reduction of 3-dehydroshikimate (DHSA) to yield shikimate (SA). The chain is Shikimate dehydrogenase (NADP(+)) from Ruegeria sp. (strain TM1040) (Silicibacter sp.).